The chain runs to 266 residues: MTRRADPAQATLFDDDEPAGAPTATGGFVPLADQFDALPADWKALLGPCLARTDWPALCAFVDGERAAGKPIFPTEVFHALHLTPVDAVRVIILGQDPYHGTGTVDGREVPQAHGLAFSVPAGVRVPPSLRNIYKEIEAEYGRKLSAGSGNLEGWAQQGVLLLNTVLTVEQGQAASHARRGWERITDCLLEHLARVGHARVFMLWGSHAQAKRALLPEGHLVLEAPHPSPLSAHRGFLGCGHFRAANDWLAAQGQSTIDWLRPQAD.

Residues 1–25 are disordered; sequence MTRRADPAQATLFDDDEPAGAPTAT. The active-site Proton acceptor is the Asp97.

This sequence belongs to the uracil-DNA glycosylase (UDG) superfamily. UNG family.

It localises to the cytoplasm. It carries out the reaction Hydrolyzes single-stranded DNA or mismatched double-stranded DNA and polynucleotides, releasing free uracil.. Its function is as follows. Excises uracil residues from the DNA which can arise as a result of misincorporation of dUMP residues by DNA polymerase or due to deamination of cytosine. In Ralstonia nicotianae (strain ATCC BAA-1114 / GMI1000) (Ralstonia solanacearum), this protein is Uracil-DNA glycosylase.